Consider the following 928-residue polypeptide: Kinesin heavy chain (928 aa).

A Kinesin motor domain is found at serine 7 to isoleucine 330. ATP contacts are provided by residues glycine 88–serine 95 and glycine 238–threonine 245. Positions alanine 343–alanine 866 form a coiled coil. Over residues serine 395 to arginine 409 the composition is skewed to low complexity. Disordered regions lie at residues serine 395 to lysine 434 and glycine 893 to serine 928. Residues asparagine 905–serine 928 are compositionally biased toward polar residues.

It belongs to the TRAFAC class myosin-kinesin ATPase superfamily. Kinesin family. Kinesin subfamily.

The protein localises to the cytoplasm. It is found in the cytoskeleton. Its function is as follows. Kinesin is a microtubule-associated force-producing protein that may play a role in organelle transport. Its motor activity is directed toward the microtubule's plus end. This chain is Kinesin heavy chain (kin), found in Neurospora crassa (strain ATCC 24698 / 74-OR23-1A / CBS 708.71 / DSM 1257 / FGSC 987).